We begin with the raw amino-acid sequence, 290 residues long: ADP-ribosylation factor-like protein 13A (290 aa).

GTP-binding positions include 28 to 35 (GLNNSGKT), 71 to 75 (DLNGD), and 130 to 133 (NKQD). Positions 204–226 (SKNNTGSGERCSSHSFSTRTGMS) are disordered.

It belongs to the small GTPase superfamily. Arf family.

This is ADP-ribosylation factor-like protein 13A (ARL13A) from Homo sapiens (Human).